The sequence spans 532 residues: Intercellular adhesion molecule 1 (532 aa).

The signal sequence occupies residues 1-27 (MAPSSPRPALPALLVLLGALFPGPGNA). Over 28 to 480 (QTSVSPPKVI…TVNVLSPRYE (453 aa)) the chain is Extracellular. Ig-like C2-type domains are found at residues 41–103 (GGSV…QSTA) and 128–193 (GKDL…LDLR). Disulfide bonds link Cys-48–Cys-92, Cys-52–Cys-96, and Cys-135–Cys-186. A glycan (N-linked (GlcNAc...) asparagine) is linked at Asn-145. Positions 152–154 (RGE) match the Cell attachment site; atypical motif. 4 N-linked (GlcNAc...) asparagine glycosylation sites follow: Asn-183, Asn-202, Asn-267, and Asn-296. 2 Ig-like C2-type domains span residues 230–297 (DTQG…LGNQ) and 325–378 (GTEV…LEVA). Cysteines 237 and 290 form a disulfide. Cys-332 and Cys-371 form a disulfide bridge. N-linked (GlcNAc...) asparagine glycans are attached at residues Asn-385 and Asn-406. Cystine bridges form between Cys-403/Cys-419, Cys-419/Cys-457, and Cys-431/Cys-457. An Ig-like C2-type 5 domain is found at 412-464 (NSQQTPMCQASGNPLPELKCLKDGTFPLPVGESVTVTRDLEGTYLCRARSTQG). Residues 481–503 (IVIITVVAAAVIMGTAGLSTYLY) traverse the membrane as a helical segment. At 504 to 532 (NRQRKIRKYRLQQAQKGTPMKPNTQATPP) the chain is on the cytoplasmic side. Thr-521 and Thr-530 each carry phosphothreonine.

It belongs to the immunoglobulin superfamily. ICAM family. Homodimer. Interacts with MUC1 and promotes cell aggregation in epithelial cells. Interacts with ARHGEF26/SGEF. Interacts (on T cell side) with CD81, CD247 and CD9 at immunological synapses between antigen-presenting cells and T cells. Monoubiquitinated, which is promoted by MARCH9 and leads to endocytosis.

The protein resides in the membrane. In terms of biological role, ICAM proteins are ligands for the leukocyte adhesion protein LFA-1 (integrin alpha-L/beta-2). During leukocyte trans-endothelial migration, ICAM1 engagement promotes the assembly of endothelial apical cups through ARHGEF26/SGEF and RHOG activation. The sequence is that of Intercellular adhesion molecule 1 (ICAM1) from Pan paniscus (Pygmy chimpanzee).